Reading from the N-terminus, the 382-residue chain is Heme A synthase (382 aa).

Helical transmembrane passes span 37 to 57 (IRVWLQILFALVFIMIAVGGL), 126 to 146 (VIGVVWALGFGYFLVRRQVPA), 152 to 172 (LLFLGLLGGAQGAIGWWMVAS), 188 to 208 (LATHLGLAFVILGFIAWYIME), 231 to 251 (STGLLHFTFLQILLGALVAGI), 288 to 308 (LVQFMHRVTGYVLILFTVVVW), and 332 to 352 (LQIVLGIVTVLYGAPAHIAIF). Position 293 (H293) interacts with heme. H353 serves as a coordination point for heme. Residues 356 to 376 (LAVIVWVLILRARFLSGYPIA) form a helical membrane-spanning segment.

Belongs to the COX15/CtaA family. Type 2 subfamily. Interacts with CtaB. Heme b serves as cofactor.

The protein localises to the cell membrane. The enzyme catalyses Fe(II)-heme o + 2 A + H2O = Fe(II)-heme a + 2 AH2. The protein operates within porphyrin-containing compound metabolism; heme A biosynthesis; heme A from heme O: step 1/1. Catalyzes the conversion of heme O to heme A by two successive hydroxylations of the methyl group at C8. The first hydroxylation forms heme I, the second hydroxylation results in an unstable dihydroxymethyl group, which spontaneously dehydrates, resulting in the formyl group of heme A. The chain is Heme A synthase from Roseobacter denitrificans (strain ATCC 33942 / OCh 114) (Erythrobacter sp. (strain OCh 114)).